The following is a 552-amino-acid chain: DNA ligase (552 aa).

Glutamate 229 contacts ATP. Lysine 231 (N6-AMP-lysine intermediate) is an active-site residue. Arginine 236 and glutamate 283 together coordinate ATP. Positions 283 and 377 each coordinate Mg(2+). Lysine 382 and lysine 397 together coordinate ATP.

Belongs to the ATP-dependent DNA ligase family. As to quaternary structure, interacts with host TOP2A and TOP2B. Requires Mg(2+) as cofactor.

It is found in the host cytoplasm. The enzyme catalyses ATP + (deoxyribonucleotide)n-3'-hydroxyl + 5'-phospho-(deoxyribonucleotide)m = (deoxyribonucleotide)n+m + AMP + diphosphate.. Its function is as follows. DNA ligase that seals nicks in double-stranded DNA during DNA replication, DNA recombination and DNA repair. Recruits cellular topoisomerase II to sites of viral replication and assembly. This Vaccinia virus (strain Copenhagen) (VACV) protein is DNA ligase (OPG180).